The primary structure comprises 274 residues: 2,3,4,5-tetrahydropyridine-2,6-dicarboxylate N-succinyltransferase (274 aa).

Substrate is bound by residues Arg-103 and Asp-140.

It belongs to the transferase hexapeptide repeat family. As to quaternary structure, homotrimer.

Its subcellular location is the cytoplasm. It carries out the reaction (S)-2,3,4,5-tetrahydrodipicolinate + succinyl-CoA + H2O = (S)-2-succinylamino-6-oxoheptanedioate + CoA. Its pathway is amino-acid biosynthesis; L-lysine biosynthesis via DAP pathway; LL-2,6-diaminopimelate from (S)-tetrahydrodipicolinate (succinylase route): step 1/3. The protein is 2,3,4,5-tetrahydropyridine-2,6-dicarboxylate N-succinyltransferase of Haemophilus ducreyi (strain 35000HP / ATCC 700724).